Here is a 1400-residue protein sequence, read N- to C-terminus: DNA-directed RNA polymerase subunit beta' (1400 aa).

Residues Cys-71, Cys-73, Cys-86, and Cys-89 each coordinate Zn(2+). Residues Asp-462, Asp-464, and Asp-466 each contribute to the Mg(2+) site. Zn(2+) is bound by residues Cys-820, Cys-893, Cys-900, and Cys-903.

It belongs to the RNA polymerase beta' chain family. The RNAP catalytic core consists of 2 alpha, 1 beta, 1 beta' and 1 omega subunit. When a sigma factor is associated with the core the holoenzyme is formed, which can initiate transcription. Mg(2+) is required as a cofactor. The cofactor is Zn(2+).

It carries out the reaction RNA(n) + a ribonucleoside 5'-triphosphate = RNA(n+1) + diphosphate. Functionally, DNA-dependent RNA polymerase catalyzes the transcription of DNA into RNA using the four ribonucleoside triphosphates as substrates. In Methylobacterium sp. (strain 4-46), this protein is DNA-directed RNA polymerase subunit beta'.